We begin with the raw amino-acid sequence, 182 residues long: Large ribosomal subunit protein bL25 (182 aa).

The protein belongs to the bacterial ribosomal protein bL25 family. CTC subfamily. In terms of assembly, part of the 50S ribosomal subunit; part of the 5S rRNA/L5/L18/L25 subcomplex. Contacts the 5S rRNA. Binds to the 5S rRNA independently of L5 and L18.

Functionally, this is one of the proteins that binds to the 5S RNA in the ribosome where it forms part of the central protuberance. The sequence is that of Large ribosomal subunit protein bL25 from Borreliella burgdorferi (strain ATCC 35210 / DSM 4680 / CIP 102532 / B31) (Borrelia burgdorferi).